The chain runs to 658 residues: MSRIAALPDHLVNQIAAGEVVERPANALKEIVENSIDAGATAIEVELAGGGIRLIRVSDNGGGIHPDDIELALHRHATSKIKTLNDLEHVASMGFRGEGLASIASVSRLTLTSRQNDSSHATQVKAEDGKLSSPTAAAHPVGTTIEAAELFFNTPARRKFLKSENTEYAHCATMLERLALAHPHIAFSLKRDGKQVFKLPAQSLHERIAAIVGEDFQTASLGIDSGNGALRLYGAIAKPTFAKGKTDKQYCFVNHRFVRDKVMLHAVKQAYRDVLHNALTPAFVLFLDLPPEAVDVNVHPTKTEIRFRDSQQVHQLVFHTLNKALADTRANLTESVGNAGEVLHDITGVVSTPMPSENDSENLFDSVSNYPTGNKSDTHNAFGSSGKTAPMPYQSAYAPQQRSLSLRESRAAMNTYAELYKKTDDIDLELSRFEQARFGNMPSETPAPQTDTPLSDGIPSQSELPPLGFAIAQLLGIYILAQAEDSLLLIDMHAAAERVNYEKMKRQRQENGNLQSQRLLIPVTFAASHEECAALADYAETLAGFGLELSDMGGNTLAVRAVPAMLGKADVVSLAKDVLNELAQVGSSQTIEEHENRILATMSCHGSIRAGRRLTLPEMNALLRDMENTPRSNQCNHGRPTWVKLTLKELDALFLRGQ.

Disordered stretches follow at residues 114–137 (RQND…PTAA) and 437–456 (RFGN…PLSD). Over residues 442 to 456 (PSETPAPQTDTPLSD) the composition is skewed to polar residues.

The protein belongs to the DNA mismatch repair MutL/HexB family.

In terms of biological role, this protein is involved in the repair of mismatches in DNA. It is required for dam-dependent methyl-directed DNA mismatch repair. May act as a 'molecular matchmaker', a protein that promotes the formation of a stable complex between two or more DNA-binding proteins in an ATP-dependent manner without itself being part of a final effector complex. This chain is DNA mismatch repair protein MutL, found in Neisseria meningitidis serogroup B (strain ATCC BAA-335 / MC58).